Here is a 111-residue protein sequence, read N- to C-terminus: Ciprofloxacin tolerance protein (111 aa).

Topologically, residues 1-5 (MVTAN) are periplasmic. The chain crosses the membrane as a helical span at residues 6–26 (FAAIAGLSLIAVALVAVFFSP). Topologically, residues 27 to 30 (YRRW) are cytoplasmic. A helical transmembrane segment spans residues 31–51 (LGFMLAGMFFWGLLEVVRFGV). The Periplasmic segment spans residues 52–58 (QVTFEMP). A helical transmembrane segment spans residues 59–79 (VTYSYLTALSLAMVMVTFVLL). Topologically, residues 80 to 111 (REDKQAQKALANRQYIEHTPVYEDDQQQCSSR) are cytoplasmic.

It localises to the cell inner membrane. In terms of biological role, may play a role in cellular filamentation, especially in response to ciprofloxacin. Increased expression confers tolerance to the antibiotic ciprofloxacin. The polypeptide is Ciprofloxacin tolerance protein (Acinetobacter baumannii).